A 460-amino-acid polypeptide reads, in one-letter code: Proton extrusion protein PxcA (460 aa).

Disordered stretches follow at residues 82–128 (FSRL…QRRD) and 143–190 (SRYK…GSGN). A compositionally biased stretch (polar residues) spans 90–102 (QNGSGPTSAQDKA). Positions 107–120 (AAEANVSESSSENS) are enriched in low complexity. The span at 151–163 (KSQPISASISTSP) shows a compositional bias: polar residues. The span at 171–184 (QPTSTQPSSSNVSV) shows a compositional bias: low complexity. Transmembrane regions (helical) follow at residues 242–262 (FLLL…NFLF), 337–357 (GLKN…LIFV), 373–393 (IYGL…DVFV), and 420–440 (FIYG…KYWI).

Belongs to the CemA family.

It is found in the cell inner membrane. Its function is as follows. Required for H(+) efflux immediately after light irradiation to form a rapid H(+) concentration gradient across the thylakoid membranes. Together with PxcL, contributes to transient H(+) uptake following dark to light transition. This chain is Proton extrusion protein PxcA, found in Synechococcus sp. (strain JA-2-3B'a(2-13)) (Cyanobacteria bacterium Yellowstone B-Prime).